Reading from the N-terminus, the 193-residue chain is Bradykinin-potentiating and C-type natriuretic peptides (193 aa).

The first 23 residues, 1–23 (MFVSRLAASGLLLLALLALSLDG), serve as a signal peptide directing secretion. The propeptide occupies 24–27 (KPVH). The interval 25–173 (PVHQSKPGRS…RMKGLAKKAM (149 aa)) is disordered. Position 28 is a pyrrolidone carboxylic acid (glutamine 28). Propeptides lie at residues 40-43 (LSAQ) and 58-64 (LSVQQWS). Glutamine 65 bears the Pyrrolidone carboxylic acid mark. The propeptide occupies 75 to 169 (VVVQPHESPA…GGARRMKGLA (95 aa)). Residues 95–123 (SPGPEAASGPAAPHRLPKSKGASATSAAS) are compositionally biased toward low complexity. Residues 125–150 (PMRDLRTDGKQERQKWGRMVQPDHHA) are compositionally biased toward basic and acidic residues. Over residues 152–162 (PGGGGGGGGGA) the composition is skewed to gly residues. Basic residues predominate over residues 163–173 (RRMKGLAKKAM). An intrachain disulfide couples cysteine 177 to cysteine 193.

The protein in the N-terminal section; belongs to the bradykinin-potentiating peptide family. This sequence in the C-terminal section; belongs to the natriuretic peptide family. As to expression, expressed by the venom gland.

Its subcellular location is the secreted. Functionally, bradykinin-potentiating peptide both inhibits the activity of the angiotensin-converting enzyme (ACE) and enhances the action of bradykinin by inhibiting the peptidases that inactivate it. It acts as an indirect hypotensive agent. Neither synthetic Tf1, nor synthetic Tf2 show bradykinin-potentiating effects. In terms of biological role, has a vasorelaxant activity in rat aortic strips and a diuretic potency in anesthetized rats. Has a vasorelaxant activity in rat aortic strips and a diuretic potency in anesthetized rats. Is as potent as Tf-CNP. This Protobothrops flavoviridis (Habu) protein is Bradykinin-potentiating and C-type natriuretic peptides.